Here is a 368-residue protein sequence, read N- to C-terminus: DNA replication and repair protein RecF (368 aa).

30-37 serves as a coordination point for ATP; that stretch reads GKNGSGKT.

It belongs to the RecF family.

It localises to the cytoplasm. Its function is as follows. The RecF protein is involved in DNA metabolism; it is required for DNA replication and normal SOS inducibility. RecF binds preferentially to single-stranded, linear DNA. It also seems to bind ATP. This chain is DNA replication and repair protein RecF, found in Marinomonas sp. (strain MWYL1).